Reading from the N-terminus, the 53-residue chain is UPF0391 membrane protein BamMC406_6344 (53 aa).

2 helical membrane passes run 5–25 and 30–50; these read AIIF…GIAA and IAKI…LLGV.

The protein belongs to the UPF0391 family.

It localises to the cell membrane. The protein is UPF0391 membrane protein BamMC406_6344 of Burkholderia ambifaria (strain MC40-6).